The primary structure comprises 646 residues: RNase E specificity factor CsrD (646 aa).

Transmembrane regions (helical) follow at residues Phe10–Phe30 and Met135–Val155. Residues Phe152–Leu219 form an HAMP-like region. Residues Arg194–Ala224 are a coiled coil. A GGDEF domain is found at Thr254–Asp387. In terms of domain architecture, EAL spans Asn396–Tyr644.

It localises to the cell membrane. Its function is as follows. Serves as a specificity factor required for RNase E-mediated decay of the small global regulatory RNAs CsrB and CsrC, it is probably not a nuclease. Nor does its activity involve c-di-GMP, despite its domain composition. Positively modulates motility gene expression, is also required for curli expression. This chain is RNase E specificity factor CsrD (csrD), found in Escherichia coli (strain K12).